Here is a 541-residue protein sequence, read N- to C-terminus: Protein wntless homolog A (541 aa).

An N-terminal signal peptide occupies residues 1-28 (MAGAIIENMSTKKLCMVGVALLLLQVLA). Topologically, residues 29-232 (FLVGGLIAPK…SIFQNGGFTM (204 aa)) are lumenal. The chain crosses the membrane as a helical span at residues 233-253 (VWFAMKTFLTPSIIIIMIWYW). Residues 254 to 268 (RRITMMTRSPVLLEK) lie on the Cytoplasmic side of the membrane. The chain crosses the membrane as a helical span at residues 269–289 (VIFALGFSMTFINIPVEWFSI). The Lumenal segment spans residues 290–303 (GYDWTWMLLFGDIR). A helical transmembrane segment spans residues 304 to 324 (QGIFYAMLLSFWIIFCGEHMM). Over 325 to 331 (DQTERNR) the chain is Cytoplasmic. The chain crosses the membrane as a helical span at residues 332–352 (ISVYWKQVGPIAFGSCCLFIF). Residues 353–379 (DMCERGVQLKNPFYSIWTTDVGAEIAM) lie on the Lumenal side of the membrane. Residues 380–400 (AFIIVAGICACLYFLFLCFMV) traverse the membrane as a helical segment. The Cytoplasmic segment spans residues 401–431 (YQVFRNISGKQSNLPAMTKARRLHYEGLIFR). A helical membrane pass occupies residues 432–452 (FKFLMIITLACAALTIVFFIT). Over 453–471 (TQITEGNWKLGDLSIELNS) the chain is Lumenal. Residues 472–492 (AFFTGVYGMWNLYVFALMFLY) traverse the membrane as a helical segment. Residues 493-541 (APSHKHYGDGQSNDGAGMSSGEELQLTTTITHIDGPTEVYRLAGKEAQE) are Cytoplasmic-facing.

Belongs to the wntless family.

It localises to the golgi apparatus membrane. Its subcellular location is the cytoplasmic vesicle membrane. In terms of biological role, required for a subset of Wnt-dependent developmental processes, in particular, eye and pronephros development. Regulates the secretion of wnt4, which is required for eye development. The protein is Protein wntless homolog A (wls-a) of Xenopus laevis (African clawed frog).